A 206-amino-acid chain; its full sequence is ATP phosphoribosyltransferase (206 aa).

It belongs to the ATP phosphoribosyltransferase family. Short subfamily. In terms of assembly, heteromultimer composed of HisG and HisZ subunits.

The protein localises to the cytoplasm. The catalysed reaction is 1-(5-phospho-beta-D-ribosyl)-ATP + diphosphate = 5-phospho-alpha-D-ribose 1-diphosphate + ATP. It functions in the pathway amino-acid biosynthesis; L-histidine biosynthesis; L-histidine from 5-phospho-alpha-D-ribose 1-diphosphate: step 1/9. Its function is as follows. Catalyzes the condensation of ATP and 5-phosphoribose 1-diphosphate to form N'-(5'-phosphoribosyl)-ATP (PR-ATP). Has a crucial role in the pathway because the rate of histidine biosynthesis seems to be controlled primarily by regulation of HisG enzymatic activity. The protein is ATP phosphoribosyltransferase of Thermus thermophilus (strain ATCC 27634 / DSM 579 / HB8).